We begin with the raw amino-acid sequence, 196 residues long: 3-isopropylmalate dehydratase small subunit (196 aa).

It belongs to the LeuD family. LeuD type 1 subfamily. In terms of assembly, heterodimer of LeuC and LeuD.

The enzyme catalyses (2R,3S)-3-isopropylmalate = (2S)-2-isopropylmalate. The protein operates within amino-acid biosynthesis; L-leucine biosynthesis; L-leucine from 3-methyl-2-oxobutanoate: step 2/4. Its function is as follows. Catalyzes the isomerization between 2-isopropylmalate and 3-isopropylmalate, via the formation of 2-isopropylmaleate. This Rhodopirellula baltica (strain DSM 10527 / NCIMB 13988 / SH1) protein is 3-isopropylmalate dehydratase small subunit.